The primary structure comprises 326 residues: Phospho-N-acetylmuramoyl-pentapeptide-transferase (326 aa).

The next 9 membrane-spanning stretches (helical) occupy residues 3-23 (ISIS…PAFI), 51-71 (TMGG…VALF), 79-99 (VGMI…DDFL), 115-135 (LALQ…GGDM), 138-158 (VFGY…FWLV), 169-189 (GIDG…GVIA), 195-215 (MDIL…FVFN), 221-243 (VFMG…MALH), and 306-326 (FFFW…LYLM).

This sequence belongs to the glycosyltransferase 4 family. MraY subfamily. It depends on Mg(2+) as a cofactor.

It is found in the cell membrane. The catalysed reaction is UDP-N-acetyl-alpha-D-muramoyl-L-alanyl-gamma-D-glutamyl-L-lysyl-D-alanyl-D-alanine + di-trans,octa-cis-undecaprenyl phosphate = Mur2Ac(oyl-L-Ala-gamma-D-Glu-L-Lys-D-Ala-D-Ala)-di-trans,octa-cis-undecaprenyl diphosphate + UMP. It functions in the pathway cell wall biogenesis; peptidoglycan biosynthesis. Functionally, catalyzes the initial step of the lipid cycle reactions in the biosynthesis of the cell wall peptidoglycan: transfers peptidoglycan precursor phospho-MurNAc-pentapeptide from UDP-MurNAc-pentapeptide onto the lipid carrier undecaprenyl phosphate, yielding undecaprenyl-pyrophosphoryl-MurNAc-pentapeptide, known as lipid I. This chain is Phospho-N-acetylmuramoyl-pentapeptide-transferase, found in Streptococcus pneumoniae (strain Taiwan19F-14).